Here is a 241-residue protein sequence, read N- to C-terminus: Uridylate kinase (241 aa).

9–10 (GS) contributes to the ATP binding site. Gly44 is a binding site for UMP. ATP-binding residues include Gly45 and Arg49. Residues Asp66 and 114–120 (IMPGQTT) each bind UMP. Thr140, Tyr146, and Asp149 together coordinate ATP.

It belongs to the UMP kinase family. Homohexamer.

Its subcellular location is the cytoplasm. The catalysed reaction is UMP + ATP = UDP + ADP. It participates in pyrimidine metabolism; CTP biosynthesis via de novo pathway; UDP from UMP (UMPK route): step 1/1. Inhibited by UTP. In terms of biological role, catalyzes the reversible phosphorylation of UMP to UDP. The chain is Uridylate kinase from Haloquadratum walsbyi (strain DSM 16790 / HBSQ001).